The chain runs to 496 residues: Fizzy-related protein homolog (496 aa).

Disordered stretches follow at residues 28–51, 64–88, and 105–166; these read RRTLTPASSPVSSPSKHGDRFIPS, INENEKSPSQNRKAKDATSDNGKDG, and EKVQ…SPRK. Thr32 is modified (phosphothreonine). Residues 32 to 42 are compositionally biased toward polar residues; the sequence is TPASSPVSSPS. Ser36 bears the Phosphoserine mark. The involved in APC/FZR1 E3 ubiquitin-protein ligase complex activity stretch occupies residues 47 to 52; sequence RFIPSR. N6-acetyllysine is present on Lys69. 2 stretches are compositionally biased toward basic and acidic residues: residues 76–86 and 106–126; these read KAKDATSDNGK and KVQDPQTEDRRLQPSTPEKKG. Phosphoserine occurs at positions 133, 138, 146, and 151. The span at 146–160 shows a compositional bias: polar residues; that stretch reads SPYSLSPVSNKSQKL. At Lys159 the chain carries N6-acetyllysine. WD repeat units follow at residues 182–222, 227–266, 269–306, 311–350, 353–395, 397–438, and 441–480; these read PELQ…VTRL, VEGDSVTSVGWSERGNLVAVGTHKGFVQIWDAAAGKKLSM, GHTARVGALAWNAEQLSSGSRDRMILQRDIRTPPLQSE, GHRQEVCGLKWSTDHQLLASGGNDNKLLVWNHSSLSPVQQ, EHLA…PLQC, DTGS…QVAK, and GHSYRVLYLAMSPDGEAIVTGAGDETLRFWNVFSKTRSTK.

This sequence belongs to the WD repeat CDC20/Fizzy family. As to quaternary structure, the unphosphorylated form interacts with APC/C during mitosis. Interacts with NINL. Interacts (in complex with the anaphase promoting complex APC) with MAD2L2; inhibits FZR1-mediated APC/C activation. Interacts with SIRT2 and USP37. Interacts (via WD repeats) with MAK. Interacts with RBBP8/CtIP; this interaction leads to RBBP8 proteasomal degradation. Interacts with HECW2. Interacts with SASS6; the interaction is regulated by CENATAC and leads to SASS6 proteasomal degradation. Interacts (via N-terminus) with CCNF. Interacts with CDC6. Interacts with TK1 (via the KEN box). In terms of processing, acetylated. Deacetylated by SIRT2 at Lys-69 and Lys-159; deacetylation enhances the interaction of FZR1 with CDC27, leading to activation of anaphase promoting complex/cyclosome (APC/C). Post-translationally, following DNA damage, it is dephosphorylated by CDC14B in G2 phase, leading to its reassociation with the APC/C, and allowing an efficient G2 DNA damage checkpoint. Phosphorylated by MAK. Ubiquitinated by the SCF(CCNF) E3 ubiquitin-protein ligase complex; leading to its degradation by the proteasome. As to expression, isoform 2 is expressed at high levels in heart, liver, spleen and some cancer cell lines whereas isoform 3 is expressed only at low levels in these tissues.

The protein localises to the nucleus. It is found in the cytoplasm. It functions in the pathway protein modification; protein ubiquitination. Its function is as follows. Substrate-specific adapter for the anaphase promoting complex/cyclosome (APC/C) E3 ubiquitin-protein ligase complex. Associates with the APC/C in late mitosis, in replacement of CDC20, and activates the APC/C during anaphase and telophase. The APC/C remains active in degrading substrates to ensure that positive regulators of the cell cycle do not accumulate prematurely. At the G1/S transition FZR1 is phosphorylated, leading to its dissociation from the APC/C. Following DNA damage, it is required for the G2 DNA damage checkpoint: its dephosphorylation and reassociation with the APC/C leads to the ubiquitination of PLK1, preventing entry into mitosis. Acts as an adapter for APC/C to target the DNA-end resection factor RBBP8/CtIP for ubiquitination and subsequent proteasomal degradation. Through the regulation of RBBP8/CtIP protein turnover, may play a role in DNA damage response, favoring DNA double-strand repair through error-prone non-homologous end joining (NHEJ) over error-free, RBBP8-mediated homologous recombination (HR). This Homo sapiens (Human) protein is Fizzy-related protein homolog.